The chain runs to 204 residues: Leucyl/phenylalanyl-tRNA--protein transferase (204 aa).

This sequence belongs to the L/F-transferase family.

Its subcellular location is the cytoplasm. The catalysed reaction is N-terminal L-lysyl-[protein] + L-leucyl-tRNA(Leu) = N-terminal L-leucyl-L-lysyl-[protein] + tRNA(Leu) + H(+). It catalyses the reaction N-terminal L-arginyl-[protein] + L-leucyl-tRNA(Leu) = N-terminal L-leucyl-L-arginyl-[protein] + tRNA(Leu) + H(+). The enzyme catalyses L-phenylalanyl-tRNA(Phe) + an N-terminal L-alpha-aminoacyl-[protein] = an N-terminal L-phenylalanyl-L-alpha-aminoacyl-[protein] + tRNA(Phe). In terms of biological role, functions in the N-end rule pathway of protein degradation where it conjugates Leu, Phe and, less efficiently, Met from aminoacyl-tRNAs to the N-termini of proteins containing an N-terminal arginine or lysine. The protein is Leucyl/phenylalanyl-tRNA--protein transferase of Brucella melitensis biotype 2 (strain ATCC 23457).